The sequence spans 148 residues: Ubiquitin-conjugating enzyme E2 29 (148 aa).

Positions 1–147 (MATRRILKEL…ARSWTQKYAL (147 aa)) constitute a UBC core domain. Cys-85 acts as the Glycyl thioester intermediate in catalysis.

It belongs to the ubiquitin-conjugating enzyme family.

It carries out the reaction S-ubiquitinyl-[E1 ubiquitin-activating enzyme]-L-cysteine + [E2 ubiquitin-conjugating enzyme]-L-cysteine = [E1 ubiquitin-activating enzyme]-L-cysteine + S-ubiquitinyl-[E2 ubiquitin-conjugating enzyme]-L-cysteine.. The protein operates within protein modification; protein ubiquitination. Functionally, accepts the ubiquitin from the E1 complex and catalyzes its covalent attachment to other proteins. The chain is Ubiquitin-conjugating enzyme E2 29 (UBC29) from Arabidopsis thaliana (Mouse-ear cress).